Reading from the N-terminus, the 97-residue chain is Large ribosomal subunit protein bL28 (97 aa).

The protein belongs to the bacterial ribosomal protein bL28 family.

This chain is Large ribosomal subunit protein bL28, found in Rickettsia felis (strain ATCC VR-1525 / URRWXCal2) (Rickettsia azadi).